We begin with the raw amino-acid sequence, 372 residues long: Hydrogenase-1 small chain (372 aa).

Residues 1 to 45 (MNNEETFYQAMRRQGVTRRSFLKYCSLAATSLGLGAGMAPKIAWA) constitute a signal peptide (tat-type signal). Residues 46–326 (LENKPRIPVV…QMGTHSTADT (281 aa)) lie on the Periplasmic side of the membrane. The [4Fe-4S] cluster site is built by Cys62, Cys65, Cys160, Cys194, His232, Cys235, Cys260, and Cys266. The [3Fe-4S] cluster site is built by Cys275, Cys294, and Cys297. A helical membrane pass occupies residues 327 to 347 (VGLTALGVVAAAVGVHAVASA). A disordered region spans residues 347-372 (AVDQRRRHNQQPTETEHQPGNEDKQA). The Cytoplasmic segment spans residues 348-372 (VDQRRRHNQQPTETEHQPGNEDKQA). Over residues 360-372 (ETEHQPGNEDKQA) the composition is skewed to basic and acidic residues.

This sequence belongs to the [NiFe]/[NiFeSe] hydrogenase small subunit family. Heterodimer of a large and a small subunit. [4Fe-4S] cluster serves as cofactor. It depends on [3Fe-4S] cluster as a cofactor. In terms of processing, predicted to be exported by the Tat system. The position of the signal peptide cleavage has not been experimentally proven.

The protein localises to the cell inner membrane. The catalysed reaction is H2 + A = AH2. Functionally, this is one of three E.coli hydrogenases synthesized in response to different physiological conditions. HYD1 is believed to have a role in hydrogen cycling during fermentative growth. The sequence is that of Hydrogenase-1 small chain (hyaA) from Escherichia coli O6:H1 (strain CFT073 / ATCC 700928 / UPEC).